A 211-amino-acid polypeptide reads, in one-letter code: Agamous-like MADS-box protein AGL12 (211 aa).

Residues 3–57 form the MADS-box domain; sequence RGKIQLKRIENPVHRQVTFCKRRTGLLKKAKELSVLCDAEIGVVIFSPQGKLFEL. One can recognise a K-box domain in the interval 95 to 185; sequence NLDPKDEINV…LEKIEENNNS (91 aa).

As to expression, preferentially expressed in roots. In root meristem, expressed in external cells of columella, lateral root cap and atrichoblasts. In mature root, expressed in the central cylinder. Expressed in leaf vasculature, young floral meristems and nectaries.

The protein localises to the nucleus. Functionally, probable transcription activator that regulates root development by controlling cell proliferation in root meristem. May mediate responses to auxin in the root. May act as promoter of the flowering transition through up-regulation of SOC, FT and LFY. This chain is Agamous-like MADS-box protein AGL12, found in Arabidopsis thaliana (Mouse-ear cress).